The following is a 785-amino-acid chain: E3 UFM1-protein ligase 1 homolog (785 aa).

The disordered stretch occupies residues 404–482 (NASFQDQDDD…AGGGGGNKKT (79 aa)).

This sequence belongs to the UFL1 family.

Functionally, E3 UFM1-protein ligase that mediates ufmylation of target proteins. In Drosophila persimilis (Fruit fly), this protein is E3 UFM1-protein ligase 1 homolog.